A 220-amino-acid chain; its full sequence is Protein DGCR6L (220 aa).

A coiled-coil region spans residues Lys-76–Ala-159.

The protein belongs to the gonadal family. In terms of tissue distribution, widely expressed in fetal and adult tissues. Highest expression in liver, heart and skeletal muscle. Lower levels in pancreas and placenta. Weak expression in brain.

It localises to the nucleus. May play a role in neural crest cell migration into the third and fourth pharyngeal pouches. This Homo sapiens (Human) protein is Protein DGCR6L (DGCR6L).